The primary structure comprises 604 residues: Putative O-acetyltransferase SAV0974 (604 aa).

The next 11 helical transmembrane spans lie at 15-35 (YMPG…IYHL), 43-63 (GFLG…SLLL), 85-105 (LLPA…LLKS), 150-170 (AIEE…LLTI), 176-196 (IGFI…FIYS), 212-232 (LQTL…KLKN), 240-260 (YVID…FFII), 267-287 (IYDG…ASVV), 310-330 (YSLY…YVDG), 332-352 (IPVY…ELSY), and 377-397 (FIRM…LVGA). Active-site residues include S459, D581, and H584.

It belongs to the acyltransferase 3 family.

It is found in the cell membrane. The polypeptide is Putative O-acetyltransferase SAV0974 (Staphylococcus aureus (strain Mu50 / ATCC 700699)).